Reading from the N-terminus, the 957-residue chain is Translation initiation factor IF-2 (957 aa).

Disordered regions lie at residues lysine 34 to lysine 282 and serine 311 to glycine 367. Residues proline 107–arginine 161 are compositionally biased toward pro residues. Residues threonine 163 to glycine 188 show a composition bias toward basic and acidic residues. Residues proline 209–proline 242 are compositionally biased toward pro residues. Basic and acidic residues-rich tracts occupy residues leucine 250–isoleucine 259 and lysine 266–arginine 275. In terms of domain architecture, tr-type G spans arginine 444–tyrosine 617. The segment at glycine 453–threonine 460 is G1. Position 453-460 (glycine 453–threonine 460) interacts with GTP. Positions glycine 478–histidine 482 are G2. The tract at residues aspartate 503 to glycine 506 is G3. GTP is bound by residues aspartate 503–histidine 507 and asparagine 557–aspartate 560. Residues asparagine 557–aspartate 560 form a G4 region. Residues serine 593 to leucine 595 form a G5 region.

The protein belongs to the TRAFAC class translation factor GTPase superfamily. Classic translation factor GTPase family. IF-2 subfamily.

The protein resides in the cytoplasm. In terms of biological role, one of the essential components for the initiation of protein synthesis. Protects formylmethionyl-tRNA from spontaneous hydrolysis and promotes its binding to the 30S ribosomal subunits. Also involved in the hydrolysis of GTP during the formation of the 70S ribosomal complex. In Thermosynechococcus vestitus (strain NIES-2133 / IAM M-273 / BP-1), this protein is Translation initiation factor IF-2.